Consider the following 163-residue polypeptide: UPF0262 protein RPE_4483 (163 aa).

The protein belongs to the UPF0262 family.

The sequence is that of UPF0262 protein RPE_4483 from Rhodopseudomonas palustris (strain BisA53).